We begin with the raw amino-acid sequence, 86 residues long: Large ribosomal subunit protein bL27 (86 aa).

This sequence belongs to the bacterial ribosomal protein bL27 family.

The protein is Large ribosomal subunit protein bL27 of Flavobacterium psychrophilum (strain ATCC 49511 / DSM 21280 / CIP 103535 / JIP02/86).